Here is a 127-residue protein sequence, read N- to C-terminus: Aspartate 1-decarboxylase (127 aa).

The Schiff-base intermediate with substrate; via pyruvic acid role is filled by Ser-25. Ser-25 is subject to Pyruvic acid (Ser). Thr-57 is a substrate binding site. Tyr-58 acts as the Proton donor in catalysis. 73-75 (GAA) provides a ligand contact to substrate.

Belongs to the PanD family. In terms of assembly, heterooctamer of four alpha and four beta subunits. Pyruvate is required as a cofactor. Is synthesized initially as an inactive proenzyme, which is activated by self-cleavage at a specific serine bond to produce a beta-subunit with a hydroxyl group at its C-terminus and an alpha-subunit with a pyruvoyl group at its N-terminus.

It is found in the cytoplasm. The enzyme catalyses L-aspartate + H(+) = beta-alanine + CO2. It participates in cofactor biosynthesis; (R)-pantothenate biosynthesis; beta-alanine from L-aspartate: step 1/1. Its function is as follows. Catalyzes the pyruvoyl-dependent decarboxylation of aspartate to produce beta-alanine. The sequence is that of Aspartate 1-decarboxylase from Clostridium botulinum (strain Loch Maree / Type A3).